The sequence spans 298 residues: N-acetylmuramic acid 6-phosphate etherase (298 aa).

The 164-residue stretch at I55–K218 folds into the SIS domain. E83 acts as the Proton donor in catalysis. Residue E114 is part of the active site.

This sequence belongs to the GCKR-like family. MurNAc-6-P etherase subfamily. As to quaternary structure, homodimer.

The enzyme catalyses N-acetyl-D-muramate 6-phosphate + H2O = N-acetyl-D-glucosamine 6-phosphate + (R)-lactate. Its pathway is amino-sugar metabolism; 1,6-anhydro-N-acetylmuramate degradation. It participates in amino-sugar metabolism; N-acetylmuramate degradation. It functions in the pathway cell wall biogenesis; peptidoglycan recycling. In terms of biological role, specifically catalyzes the cleavage of the D-lactyl ether substituent of MurNAc 6-phosphate, producing GlcNAc 6-phosphate and D-lactate. Together with AnmK, is also required for the utilization of anhydro-N-acetylmuramic acid (anhMurNAc) either imported from the medium or derived from its own cell wall murein, and thus plays a role in cell wall recycling. This Shigella dysenteriae serotype 1 (strain Sd197) protein is N-acetylmuramic acid 6-phosphate etherase.